A 204-amino-acid chain; its full sequence is High frequency lysogenization protein HflD homolog (204 aa).

Belongs to the HflD family.

The protein localises to the cytoplasm. It is found in the cell inner membrane. This Shewanella amazonensis (strain ATCC BAA-1098 / SB2B) protein is High frequency lysogenization protein HflD homolog.